The chain runs to 337 residues: Neurogenic differentiation factor 6 (337 aa).

The tract at residues 28 to 80 (QKQIKKPESFPKQVVLRGKSIKRAPGEETEKEEEEEDREEEDENGLSRRRGLR) is disordered. Positions 54-71 (EETEKEEEEEDREEEDEN) are enriched in acidic residues. The Nuclear localization signal signature appears at 80–86 (RKKKTTK). Residues 94 to 146 (FRRQEANARERNRMHGLNDALDNLRKVVPCYSKTQKLSKIETLRLAKNYIWAL) form the bHLH domain.

As to quaternary structure, efficient DNA binding requires dimerization with another bHLH protein. As to expression, specific to the nervous system of both embryos and adults. Highest levels in the cortical plate of the cerebrum.

Its subcellular location is the nucleus. Its function is as follows. Activates E box-dependent transcription in collaboration with TCF3/E47. May be a trans-acting factor involved in the development and maintenance of the mammalian nervous system. Transactivates the promoter of its own gene. This chain is Neurogenic differentiation factor 6 (Neurod6), found in Mus musculus (Mouse).